A 191-amino-acid polypeptide reads, in one-letter code: Fe/S biogenesis protein NfuA (191 aa).

[4Fe-4S] cluster-binding residues include Cys-149 and Cys-152.

Belongs to the NfuA family. As to quaternary structure, homodimer. It depends on [4Fe-4S] cluster as a cofactor.

Involved in iron-sulfur cluster biogenesis. Binds a 4Fe-4S cluster, can transfer this cluster to apoproteins, and thereby intervenes in the maturation of Fe/S proteins. Could also act as a scaffold/chaperone for damaged Fe/S proteins. The protein is Fe/S biogenesis protein NfuA of Yersinia enterocolitica serotype O:8 / biotype 1B (strain NCTC 13174 / 8081).